The chain runs to 397 residues: 1-deoxy-D-xylulose 5-phosphate reductoisomerase (397 aa).

NADPH-binding residues include Thr10, Gly11, Ser12, Ile13, Asn38, and Asn125. Lys126 serves as a coordination point for 1-deoxy-D-xylulose 5-phosphate. Residue Glu127 coordinates NADPH. Mn(2+) is bound at residue Asp151. 1-deoxy-D-xylulose 5-phosphate-binding residues include Ser152, Glu153, Ser187, and His210. Glu153 is a binding site for Mn(2+). Gly216 lines the NADPH pocket. The 1-deoxy-D-xylulose 5-phosphate site is built by Ser223, Asn228, Lys229, and Glu232. Glu232 contacts Mn(2+).

The protein belongs to the DXR family. Homodimer. The cofactor is Mg(2+). Mn(2+) is required as a cofactor.

The catalysed reaction is 2-C-methyl-D-erythritol 4-phosphate + NADP(+) = 1-deoxy-D-xylulose 5-phosphate + NADPH + H(+). It functions in the pathway isoprenoid biosynthesis; isopentenyl diphosphate biosynthesis via DXP pathway; isopentenyl diphosphate from 1-deoxy-D-xylulose 5-phosphate: step 1/6. In terms of biological role, catalyzes the NADPH-dependent rearrangement and reduction of 1-deoxy-D-xylulose-5-phosphate (DXP) to 2-C-methyl-D-erythritol 4-phosphate (MEP). The chain is 1-deoxy-D-xylulose 5-phosphate reductoisomerase from Blochmanniella pennsylvanica (strain BPEN).